We begin with the raw amino-acid sequence, 326 residues long: Tagatose 1,6-diphosphate aldolase (326 aa).

Belongs to the aldolase LacD family.

The enzyme catalyses D-tagatofuranose 1,6-bisphosphate = D-glyceraldehyde 3-phosphate + dihydroxyacetone phosphate. It participates in carbohydrate metabolism; D-tagatose 6-phosphate degradation; D-glyceraldehyde 3-phosphate and glycerone phosphate from D-tagatose 6-phosphate: step 2/2. The protein is Tagatose 1,6-diphosphate aldolase of Streptococcus pneumoniae (strain ATCC BAA-255 / R6).